The following is a 28-amino-acid chain: Conotoxin Cl6a (28 aa).

Disulfide bonds link Cys3–Cys13, Cys7–Cys19, and Cys12–Cys24.

In terms of tissue distribution, expressed by the venom duct.

The protein resides in the secreted. The polypeptide is Conotoxin Cl6a (Californiconus californicus (California cone)).